The sequence spans 453 residues: Allantoinase (453 aa).

Zn(2+)-binding residues include His59, His61, Lys146, His186, His242, and Asp315. Lys146 is modified (N6-carboxylysine).

The protein belongs to the metallo-dependent hydrolases superfamily. Allantoinase family. As to quaternary structure, homotetramer. Requires Zn(2+) as cofactor. Post-translationally, carboxylation allows a single lysine to coordinate two zinc ions.

It carries out the reaction (S)-allantoin + H2O = allantoate + H(+). It participates in nitrogen metabolism; (S)-allantoin degradation; allantoate from (S)-allantoin: step 1/1. In terms of biological role, catalyzes the conversion of allantoin (5-ureidohydantoin) to allantoic acid by hydrolytic cleavage of the five-member hydantoin ring. This chain is Allantoinase, found in Escherichia coli O127:H6 (strain E2348/69 / EPEC).